Here is a 520-residue protein sequence, read N- to C-terminus: GMP synthase [glutamine-hydrolyzing] (520 aa).

The Glutamine amidotransferase type-1 domain maps to 9 to 202; the sequence is SVLIIDFGSQ…VHNIAGITGD (194 aa). Cys-86 (nucleophile) is an active-site residue. Active-site residues include His-176 and Glu-178. A GMPS ATP-PPase domain is found at 203–395; sequence WSMSAYRAKA…LGLPDSFIGR (193 aa). 230–236 is a binding site for ATP; it reads SGGVDSS.

Homodimer.

It carries out the reaction XMP + L-glutamine + ATP + H2O = GMP + L-glutamate + AMP + diphosphate + 2 H(+). It functions in the pathway purine metabolism; GMP biosynthesis; GMP from XMP (L-Gln route): step 1/1. Catalyzes the synthesis of GMP from XMP. The sequence is that of GMP synthase [glutamine-hydrolyzing] from Allorhizobium ampelinum (strain ATCC BAA-846 / DSM 112012 / S4) (Agrobacterium vitis (strain S4)).